The chain runs to 357 residues: Phosphoribosylformylglycinamidine cyclo-ligase (357 aa).

This sequence belongs to the AIR synthase family.

The protein resides in the cytoplasm. It carries out the reaction 2-formamido-N(1)-(5-O-phospho-beta-D-ribosyl)acetamidine + ATP = 5-amino-1-(5-phospho-beta-D-ribosyl)imidazole + ADP + phosphate + H(+). It participates in purine metabolism; IMP biosynthesis via de novo pathway; 5-amino-1-(5-phospho-D-ribosyl)imidazole from N(2)-formyl-N(1)-(5-phospho-D-ribosyl)glycinamide: step 2/2. This is Phosphoribosylformylglycinamidine cyclo-ligase from Rhodopseudomonas palustris (strain ATCC BAA-98 / CGA009).